The sequence spans 310 residues: Protease HtpX homolog (310 aa).

2 helical membrane-spanning segments follow: residues 16–36 and 55–75; these read NAVL…VDAI and IFPT…LVCI. H166 is a binding site for Zn(2+). Residue E167 is part of the active site. H170 is a binding site for Zn(2+). Helical transmembrane passes span 182 to 202 and 214 to 234; these read VGIL…FFMG and MILW…QMYL. A Zn(2+)-binding site is contributed by E239.

It belongs to the peptidase M48B family. It depends on Zn(2+) as a cofactor.

The protein localises to the cell inner membrane. The polypeptide is Protease HtpX homolog (Helicobacter pylori (strain J99 / ATCC 700824) (Campylobacter pylori J99)).